Consider the following 916-residue polypeptide: Isoleucine--tRNA ligase (916 aa).

The short motif at 57–67 (PYANGNLHMGH) is the 'HIGH' region element. Position 554 (E554) interacts with L-isoleucyl-5'-AMP. A 'KMSKS' region motif is present at residues 595 to 599 (KMSKS). K598 contributes to the ATP binding site. 4 residues coordinate Zn(2+): C885, C888, C905, and C908.

The protein belongs to the class-I aminoacyl-tRNA synthetase family. IleS type 1 subfamily. In terms of assembly, monomer. Requires Zn(2+) as cofactor.

It is found in the cytoplasm. The enzyme catalyses tRNA(Ile) + L-isoleucine + ATP = L-isoleucyl-tRNA(Ile) + AMP + diphosphate. In terms of biological role, catalyzes the attachment of isoleucine to tRNA(Ile). As IleRS can inadvertently accommodate and process structurally similar amino acids such as valine, to avoid such errors it has two additional distinct tRNA(Ile)-dependent editing activities. One activity is designated as 'pretransfer' editing and involves the hydrolysis of activated Val-AMP. The other activity is designated 'posttransfer' editing and involves deacylation of mischarged Val-tRNA(Ile). The chain is Isoleucine--tRNA ligase from Staphylococcus saprophyticus subsp. saprophyticus (strain ATCC 15305 / DSM 20229 / NCIMB 8711 / NCTC 7292 / S-41).